Consider the following 322-residue polypeptide: TATA box-binding protein-like 2 (322 aa).

A disordered region spans residues 31-54; sequence PALSSTQDSTYLSGRAGPSRESGA. Residues 32–42 are compositionally biased toward polar residues; the sequence is ALSSTQDSTYL.

This sequence belongs to the TBP family.

It localises to the nucleus. Its function is as follows. TATA box-binding transcription factor. Members of the TBP family are differentially required to regulate transcription and development during early embryogenesis. This Takifugu rubripes (Japanese pufferfish) protein is TATA box-binding protein-like 2.